A 77-amino-acid chain; its full sequence is Membrane-associated ATPase epsilon chain (77 aa).

The protein to E.hirae NtpH. In terms of assembly, sul-ATPase is composed of six (or maybe five) subunits: alpha, beta, delta, gamma, C (proteolipid), and possibly epsilon.

It carries out the reaction ATP + H2O + 4 H(+)(in) = ADP + phosphate + 5 H(+)(out). In Sulfolobus acidocaldarius (strain ATCC 33909 / DSM 639 / JCM 8929 / NBRC 15157 / NCIMB 11770), this protein is Membrane-associated ATPase epsilon chain (atpE).